The following is a 590-amino-acid chain: Probable lysosomal cobalamin transporter (590 aa).

Transmembrane regions (helical) follow at residues 8–28, 46–66, 94–114, 145–165, 190–210, 314–334, 348–367, 376–396, 421–441, and 508–528; these read LIWV…SIFI, IFTL…VALV, AVAY…VVPF, TVAF…VPIG, ALTF…VLYT, LLSG…MLLT, CGYI…VFVH, YILF…GIAT, ITTV…SMVV, and FFGI…LLVF. A disordered region spans residues 567-590; that stretch reads WEDITGRASRSPQVSGSAGRGTRE.

This sequence belongs to the LIMR family. LMBRD1 subfamily.

Its subcellular location is the lysosome membrane. Functionally, probable lysosomal cobalamin transporter. Required to export cobalamin from lysosomes allowing its conversion to cofactors. This chain is Probable lysosomal cobalamin transporter, found in Ajellomyces capsulatus (strain NAm1 / WU24) (Darling's disease fungus).